The sequence spans 376 residues: MKIVVDENMPYVEPLFGALGEIIPVNGRTLTPEQVQDADVLLVRSVTRVNAALLDANPKLKFVGSATIGTDHVDLAYLAGRGIPFSNAPGCNATAVGEFAFIAMLELAARFNSPLKGKVVGIVGAGNTGSATAKCLEAYGIKVLLNDPIKAAEGDPRHFVSLETLLLEADIISLHVPITRSGEHKTLHLFDEARLMSLKPNIWLVNCCRGDVIDNQALIKVKKQRDDLKLVLDVWEGEPHPMPELVPFAEFATPHIAGYSLEGKARGTFMLYQKLCELLAIPANKRLSELLPPFHFKAVELEQTPDEKALLQLARFVYDLRDDDAVFRNGFARSNGFDTMRKNHKHRREFSALALAYHGQSEVDWLSNLGFSGVGR.

The substrate site is built by Ser45 and Thr67. Asp147 serves as a coordination point for NAD(+). Arg209 is an active-site residue. Asp233 lines the NAD(+) pocket. Glu238 is a catalytic residue. His255 serves as the catalytic Proton donor. Gly258 is a binding site for NAD(+). Tyr259 contacts substrate.

The protein belongs to the D-isomer specific 2-hydroxyacid dehydrogenase family. PdxB subfamily. Homodimer.

The protein resides in the cytoplasm. The catalysed reaction is 4-phospho-D-erythronate + NAD(+) = (R)-3-hydroxy-2-oxo-4-phosphooxybutanoate + NADH + H(+). The protein operates within cofactor biosynthesis; pyridoxine 5'-phosphate biosynthesis; pyridoxine 5'-phosphate from D-erythrose 4-phosphate: step 2/5. In terms of biological role, catalyzes the oxidation of erythronate-4-phosphate to 3-hydroxy-2-oxo-4-phosphonooxybutanoate. This Shewanella sp. (strain MR-7) protein is Erythronate-4-phosphate dehydrogenase.